The chain runs to 129 residues: L5 homolog (129 aa).

The helical; Signal-anchor for type III membrane protein transmembrane segment at 27–47 (YFYILVFEVIVALIILNFFFK) threads the bilayer. Cys-76 and Cys-106 are oxidised to a cystine.

It belongs to the chordopoxvirinae L5 family. In terms of assembly, part of a stable entry-fusion complex (EFC) which is at least composed of proteins A16, A21, A28, G3, G9, H2, J5, and L5. Formation of the viral membrane is necessary for the assembly of the complex. Interacts with G3. Most cysteines are linked by disulfide bonds. They are created by the viral disulfide bond formation pathway, a poxvirus-specific redox pathway that operates on the cytoplasmic side of the MV membranes.

The protein resides in the virion membrane. Functionally, envelope protein part of the entry-fusion complex responsible for the virus membrane fusion with host cell membrane during virus entry. Also plays a role in cell-cell fusion (syncytium formation). This is L5 homolog from Fowlpox virus (strain NVSL) (FPV).